The following is a 358-amino-acid chain: Methylthioribose-1-phosphate isomerase (358 aa).

Residues 54–56 (RGA), Arg96, and Gln205 each bind substrate. Catalysis depends on Asp246, which acts as the Proton donor. Residue 256-257 (NK) participates in substrate binding.

The protein belongs to the eIF-2B alpha/beta/delta subunits family. MtnA subfamily.

The catalysed reaction is 5-(methylsulfanyl)-alpha-D-ribose 1-phosphate = 5-(methylsulfanyl)-D-ribulose 1-phosphate. It participates in amino-acid biosynthesis; L-methionine biosynthesis via salvage pathway; L-methionine from S-methyl-5-thio-alpha-D-ribose 1-phosphate: step 1/6. Its function is as follows. Catalyzes the interconversion of methylthioribose-1-phosphate (MTR-1-P) into methylthioribulose-1-phosphate (MTRu-1-P). This Pseudomonas savastanoi pv. phaseolicola (strain 1448A / Race 6) (Pseudomonas syringae pv. phaseolicola (strain 1448A / Race 6)) protein is Methylthioribose-1-phosphate isomerase.